Consider the following 38-residue polypeptide: Large ribosomal subunit protein bL36 (38 aa).

This sequence belongs to the bacterial ribosomal protein bL36 family.

In Ectopseudomonas mendocina (strain ymp) (Pseudomonas mendocina), this protein is Large ribosomal subunit protein bL36.